Reading from the N-terminus, the 146-residue chain is UPF0742 protein SPAC977.02 (146 aa).

A helical transmembrane segment spans residues 38–60 (LTVKYCLAVKLLIYLLYCWYIYS).

This sequence belongs to the UPF0742 family.

The protein localises to the cytoplasm. It is found in the nucleus membrane. In Schizosaccharomyces pombe (strain 972 / ATCC 24843) (Fission yeast), this protein is UPF0742 protein SPAC977.02.